The following is a 338-amino-acid chain: Ornithine carbamoyltransferase, catabolic (338 aa).

Residues 65-68, Gln-92, Arg-116, and 143-146 each bind carbamoyl phosphate; these read STRT and HPTQ. Residues Asn-175, Asp-239, and 243-244 contribute to the L-ornithine site; that span reads SM. Carbamoyl phosphate contacts are provided by residues 280-281 and Arg-325; that span reads CL.

This sequence belongs to the aspartate/ornithine carbamoyltransferase superfamily. OTCase family.

The protein localises to the cytoplasm. The catalysed reaction is carbamoyl phosphate + L-ornithine = L-citrulline + phosphate + H(+). It participates in amino-acid degradation; L-arginine degradation via ADI pathway; carbamoyl phosphate from L-arginine: step 2/2. Reversibly catalyzes the transfer of the carbamoyl group from carbamoyl phosphate (CP) to the N(epsilon) atom of ornithine (ORN) to produce L-citrulline. The chain is Ornithine carbamoyltransferase, catabolic from Treponema denticola (strain ATCC 35405 / DSM 14222 / CIP 103919 / JCM 8153 / KCTC 15104).